The primary structure comprises 1045 residues: MTDSDQSLKVLEELFKNLSVATADNRVEAAQEVASFLNGNIIEHDIPEKFFEELAKAVKDKKTSANFLEAVAHIANEANLSPSVEPFVITLVPEICAKAGDKDKDVQAVASKTLVAISKAINPVAIKAYLPHLTKSLETTNKWQEKVSVLAAISALVDAAKEQVALRMPELIPVLSETMWDTKKEVKEAATATMTKATETVDNKDIERFIPQLISCIADPKQVPETVHLLGATTFVAEVTPATLSIMVPLLSRGLAERETSIKRKAAVIIDNMCKLVEDPQVVAPFLDKLLPGLKNNYATIADPEAREVTLRGLKTLRRVGNVTEDDVLPEISHAGDIETTLGVINELLKGENVAPRFKIVVEYIAAMAGDLIDERVIDQQAWFTHITPYMTIFMHERNAKDVLDEFRKRAVDNIPVGPNFDDEEDEGEDLCNCEFSLAYGAKILLNKTQLRLKRGRRYGLCGPNGAGKSTLMRAIANGQVDGFPTPEECMTVYVEHDIDGTHADTSVLDFVVSSEVGTKEAITAKLVEFGFTEEMINMPISSLSGGWKMKLALARAVLKNADILLLDEPTNHLDTVNVAWLVNYLNTCGITSVIVSHDSGFLDNVCQYIIHYEGLKLRKYKGNLSEFVKKCPTAQSYYELGASDLEFKFPEPGYLEGVKTKQKAIVKVSNMTFQYPGTSKPQISDISFQCSLSSRIAVIGPNGAGKSTLINVLTGELLPTSGEVYTHENCRIAYIKQHAFAHIESHLDKTPSEYIQWRFQTGEDRETMDRANRQINENDAEAMNKIFKIEGTPRRIAGIHARRKFKNTYEYECSFLLGENIGMKSERWVPMMSVDNAWIPRGELVESHSKMVAEVDMKEALASGQFRPLTRKEIEEHCAMLGLDAELVSHSRIRGLSGGQKVKLVLAACSWQRPHLIVLDEPTNYLDRDSLGALSKALKAFEGGVIIITHSAEFTKNLTEEVWAVKDGKMTPSGHNWVSGQGAGPRIEKKEDEEDKFDAMGNKIAGGKKKKKLSSAELRKKKKERMKKKKELGDAYVSSDDEDF.

7 HEAT repeats span residues 5–42 (DQSL…GNII), 43–85 (EHDI…PSVE), 86–123 (PFVI…AINP), 125–162 (AIKA…AAKE), 166–203 (LRMP…TVDN), 205–241 (DIER…EVTP), and 242–279 (ATLS…LVED). The ADP site is built by Ile42, His44, and Ser83. Positions 392, 396, and 397 each coordinate ADP. 2 consecutive ABC transporter domains span residues 426–641 (DEGE…YYEL) and 667–993 (VKVS…KKED). Residues Asn703, Glu922, Asn925, and His951 each contribute to the ADP site. Residues 974 to 1045 (SGHNWVSGQG…AYVSSDDEDF (72 aa)) are disordered. Over residues 1007–1031 (GGKKKKKLSSAELRKKKKERMKKKK) the composition is skewed to basic residues.

Belongs to the ABC transporter superfamily. ABCF family. EF3 subfamily. In terms of assembly, monomer.

It localises to the cytoplasm. The protein resides in the cytosol. It catalyses the reaction ATP + H2O = ADP + phosphate + H(+). The protein operates within protein biosynthesis; polypeptide chain elongation. Ribosome-dependent ATPase that functions in cytoplasmic translation elongation. Required for the ATP-dependent release of deacylated tRNA from the ribosomal E-site during protein biosynthesis. Stimulates the eEF1A-dependent binding of aminoacyl-tRNA to the ribosomal A-site, which has reduced affinity for tRNA as long as the E-site is occupied. Assists translation termination by stimulating the release of nascent protein from the ribosome by release factors. The sequence is that of Elongation factor 3 (TEF3) from Candida glabrata (strain ATCC 2001 / BCRC 20586 / JCM 3761 / NBRC 0622 / NRRL Y-65 / CBS 138) (Yeast).